Reading from the N-terminus, the 133-residue chain is Large ribosomal subunit protein bL17 (133 aa).

It belongs to the bacterial ribosomal protein bL17 family. Part of the 50S ribosomal subunit. Contacts protein L32.

The chain is Large ribosomal subunit protein bL17 from Pseudoalteromonas translucida (strain TAC 125).